The sequence spans 149 residues: Nascent polypeptide-associated complex subunit beta-2 (149 aa).

Positions 38–103 (DKDNTKLQAE…PKENTLNGLY (66 aa)) constitute an NAC-A/B domain.

The protein belongs to the NAC-beta family. Part of the nascent polypeptide-associated complex (NAC), consisting of EGD2 and either EGD1 or BTT1. NAC associates with ribosomes via EGD1 or BTT1.

Its subcellular location is the cytoplasm. The protein localises to the nucleus. Functionally, acts as a component of the nascent polypeptide-associated complex (NAC), which promotes mitochondrial protein import by enhancing productive ribosome interactions with the outer mitochondrial membrane. Also blocks the inappropriate interaction of ribosomes translating non-secretory nascent polypeptides with translocation sites in the membrane of the endoplasmic reticulum. BTT1 may act as a transcription factor that exert a negative effect on the expression of several genes that are transcribed by RNA polymerase II. In Saccharomyces cerevisiae (strain ATCC 204508 / S288c) (Baker's yeast), this protein is Nascent polypeptide-associated complex subunit beta-2 (BTT1).